Reading from the N-terminus, the 240-residue chain is UDP-2,3-diacylglucosamine hydrolase (240 aa).

The Mn(2+) site is built by D8, H10, D41, N79, and H114. Residue 79–80 coordinates substrate; that stretch reads NR. The substrate site is built by D122, S160, N164, K167, and H195. Residues H195 and H197 each coordinate Mn(2+).

This sequence belongs to the LpxH family. Mn(2+) is required as a cofactor.

It localises to the cell inner membrane. It catalyses the reaction UDP-2-N,3-O-bis[(3R)-3-hydroxytetradecanoyl]-alpha-D-glucosamine + H2O = 2-N,3-O-bis[(3R)-3-hydroxytetradecanoyl]-alpha-D-glucosaminyl 1-phosphate + UMP + 2 H(+). Its pathway is glycolipid biosynthesis; lipid IV(A) biosynthesis; lipid IV(A) from (3R)-3-hydroxytetradecanoyl-[acyl-carrier-protein] and UDP-N-acetyl-alpha-D-glucosamine: step 4/6. Hydrolyzes the pyrophosphate bond of UDP-2,3-diacylglucosamine to yield 2,3-diacylglucosamine 1-phosphate (lipid X) and UMP by catalyzing the attack of water at the alpha-P atom. Involved in the biosynthesis of lipid A, a phosphorylated glycolipid that anchors the lipopolysaccharide to the outer membrane of the cell. This is UDP-2,3-diacylglucosamine hydrolase from Serratia proteamaculans (strain 568).